Consider the following 142-residue polypeptide: Type IV pilus subunit protein TapA (142 aa).

Positions 1–6 (MKKQSG) are cleaved as a propeptide — leader sequence. Position 7 is an N-methylphenylalanine (phenylalanine 7). Residues 7–27 (FTLIELMIVVAIVAILAAIAL) form a helical membrane-spanning segment.

The protein belongs to the N-Me-Phe pilin family.

It is found in the membrane. Major component of the type IV (TAP) pilus. Aeromonas hydrophila possesses two distinct families of type IV pili: the bundle-forming pilus (Bfp) and the type IV pilus (Tap). The protein is Type IV pilus subunit protein TapA (tapA) of Aeromonas hydrophila.